The primary structure comprises 211 residues: PITH domain-containing protein GA19395 (211 aa).

The PITH domain maps to 20 to 192 (DHALEMGIEY…GVTICNYEAR (173 aa)).

It belongs to the PITHD1 family.

The chain is PITH domain-containing protein GA19395 from Drosophila pseudoobscura pseudoobscura (Fruit fly).